The sequence spans 88 residues: UPF0250 protein Sputcn32_2874 (88 aa).

It belongs to the UPF0250 family.

The polypeptide is UPF0250 protein Sputcn32_2874 (Shewanella putrefaciens (strain CN-32 / ATCC BAA-453)).